The sequence spans 269 residues: Type II restriction enzyme SfiI (269 aa).

The enzyme catalyses Endonucleolytic cleavage of DNA to give specific double-stranded fragments with terminal 5'-phosphates.. In terms of biological role, an F and P subtype restriction enzyme that recognizes the double-stranded sequence 5'-GGCCN(5)GGCC-3' and cleaves before N-9. The sequence is that of Type II restriction enzyme SfiI (sfiIR) from Streptomyces fimbriatus.